The primary structure comprises 383 residues: Protein RecA (383 aa).

79–86 (GPESSGKT) is a binding site for ATP. The tract at residues 347 to 369 (IEEDNTEEKQSSKEKETDEKADK) is disordered. Over residues 353 to 369 (EEKQSSKEKETDEKADK) the composition is skewed to basic and acidic residues.

Belongs to the RecA family.

The protein localises to the cytoplasm. Functionally, can catalyze the hydrolysis of ATP in the presence of single-stranded DNA, the ATP-dependent uptake of single-stranded DNA by duplex DNA, and the ATP-dependent hybridization of homologous single-stranded DNAs. It interacts with LexA causing its activation and leading to its autocatalytic cleavage. The chain is Protein RecA from Streptococcus mutans serotype c (strain ATCC 700610 / UA159).